The primary structure comprises 336 residues: MRIQADFSLDFPRAYGTLEASADFRTVPEDFQVTENLGFEPAGEGEHVYLWIEKRGENTAWVAEQLAVYAGVKPTDIGYAGRKDRHAITRQWFSVYLPLKSNHPEPEWQGFSSDRIQVLRVARHVRKLRRGEHESNHFVIGLRQLQCADKTAFHERLDCVLRSGVPNYFGEQRFGNAGRNLIEAESLLVGKKPYRDRQKRGLILSAARSYLFNQVLADRVRKGDWQISVAGEPCAYPSGPLWGRGRPLALVELLARETELLSSWRDWCNELEHVGTSQERRALLLAIKTPSYRWLVGDHLELAFTLEAGAFATSVLRELVSLNNQQLRLSGTESSD.

Asp84 (nucleophile) is an active-site residue. The 135-residue stretch at 164–298 (GVPNYFGEQR…TPSYRWLVGD (135 aa)) folds into the TRUD domain.

The protein belongs to the pseudouridine synthase TruD family.

The enzyme catalyses uridine(13) in tRNA = pseudouridine(13) in tRNA. Responsible for synthesis of pseudouridine from uracil-13 in transfer RNAs. The protein is tRNA pseudouridine synthase D of Cellvibrio japonicus (strain Ueda107) (Pseudomonas fluorescens subsp. cellulosa).